Here is an 84-residue protein sequence, read N- to C-terminus: MSSVVKKPLGGNTDTGDHHNQKTEWPELVGKSVEEAKKVILQDKSEAQIVVLPVGTIVTMEYRIDRVRLFVDSLDKIAQVPRVG.

Residues 1 to 12 (MSSVVKKPLGGN) form the signal peptide. Residues 1 to 28 (MSSVVKKPLGGNTDTGDHHNQKTEWPEL) are disordered. A compositionally biased stretch (basic and acidic residues) spans 15-25 (TGDHHNQKTEW).

Monomer.

The protein resides in the secreted. Its function is as follows. Inhibits B.lichenoformis subtilisin, B.subtilis subtilisin, bovine pancreatic alpha-chymotrypsin and porcine alpha-chymotrypsin with Ki of 3.92 nM, 5.70 nM, 7.24 nM and 9.35 nM respectively. B.lichenoformis subtilisin is inhibited with a molar ratio of 1:0.87. Also inhibits chymotrypsin-like activities from the digestive tracts of the insect larvae T.molitor, P.interpunctella and H.armigera. Does not inhibit bovine pancreatic trypsin, porcine pancreatic elastase, or human leukocyte elastase. The sequence is that of Subtilisin-chymotrypsin inhibitor WSCI from Triticum aestivum (Wheat).